A 185-amino-acid polypeptide reads, in one-letter code: MATTKHLALAILVLLSIGMTTSARTLLGYGPGGGGGGGGGGEGGGGGYGGSGYGSGSGYGEGGGSGGAAGGGYGRGGGGGGGGGEGGGSGSGYGSGQGSGYGAGVGGAGGYGSGGGGGGGQGGGAGGYGQGSGYGSGYGSGAGGAHGGGYGSGGGGGGGGGQGGGSGSGSGSGYGSGSGGGNGHH.

Residues 1 to 27 (MATTKHLALAILVLLSIGMTTSARTLL) form the signal peptide. Residues 149-185 (GYGSGGGGGGGGGQGGGSGSGSGSGYGSGSGGGNGHH) are disordered.

The protein localises to the secreted. The protein resides in the cell wall. Its function is as follows. Responsible for plasticity of the cell wall. The polypeptide is Glycine-rich cell wall structural protein 2 (GRP0.9) (Oryza sativa subsp. indica (Rice)).